Consider the following 144-residue polypeptide: Large ribosomal subunit protein uL11 (144 aa).

This sequence belongs to the universal ribosomal protein uL11 family. In terms of assembly, part of the ribosomal stalk of the 50S ribosomal subunit. Interacts with L10 and the large rRNA to form the base of the stalk. L10 forms an elongated spine to which L12 dimers bind in a sequential fashion forming a multimeric L10(L12)X complex. One or more lysine residues are methylated.

Its function is as follows. Forms part of the ribosomal stalk which helps the ribosome interact with GTP-bound translation factors. This chain is Large ribosomal subunit protein uL11, found in Streptomyces coelicolor (strain ATCC BAA-471 / A3(2) / M145).